Reading from the N-terminus, the 176-residue chain is ATP-dependent protease subunit HslV (176 aa).

Residue Thr-5 is part of the active site. Na(+)-binding residues include Gly-161, Cys-164, and Thr-167.

It belongs to the peptidase T1B family. HslV subfamily. In terms of assembly, a double ring-shaped homohexamer of HslV is capped on each side by a ring-shaped HslU homohexamer. The assembly of the HslU/HslV complex is dependent on binding of ATP.

It localises to the cytoplasm. It carries out the reaction ATP-dependent cleavage of peptide bonds with broad specificity.. Allosterically activated by HslU binding. In terms of biological role, protease subunit of a proteasome-like degradation complex believed to be a general protein degrading machinery. In Wolinella succinogenes (strain ATCC 29543 / DSM 1740 / CCUG 13145 / JCM 31913 / LMG 7466 / NCTC 11488 / FDC 602W) (Vibrio succinogenes), this protein is ATP-dependent protease subunit HslV.